A 360-amino-acid polypeptide reads, in one-letter code: MRVFNFSAGPAALPEEVLRQAADEMLDWHGSGMSVMEMSHRGKEFMSIHEAALADLRELLDVPASHRILFLQGGGIAENAIVPMNLLGSRKTADFVVTGSWSQKSFNEAKKYGTPHLAASGKTADGFTRAPARAEWQLSDDPAYVHLCTNETIDGVETFEIPDLGDVPLVADVSSHILSRPMDVAKYGVLFGGAQKNIGMAGVTVVIVREDLLDRALSICPSAFEWKTVAANNSLYNTPPTYAIYIAGLVFQWLKRQGGLEAIEARNIEKAKLLYDTIDASGFYLNKVEPAVRSRMNVPFFLADETRNEDFLAGAKARGLLQLKGHKSVGGMRASIYNAVPLEGVKALVEYMKDFEQRGA.

R41 serves as a coordination point for L-glutamate. Residues W101, T152, D172, and Q195 each contribute to the pyridoxal 5'-phosphate site. The residue at position 196 (K196) is an N6-(pyridoxal phosphate)lysine. Residue 237–238 (NT) participates in pyridoxal 5'-phosphate binding.

It belongs to the class-V pyridoxal-phosphate-dependent aminotransferase family. SerC subfamily. Homodimer. Pyridoxal 5'-phosphate is required as a cofactor.

Its subcellular location is the cytoplasm. The enzyme catalyses O-phospho-L-serine + 2-oxoglutarate = 3-phosphooxypyruvate + L-glutamate. It carries out the reaction 4-(phosphooxy)-L-threonine + 2-oxoglutarate = (R)-3-hydroxy-2-oxo-4-phosphooxybutanoate + L-glutamate. It functions in the pathway amino-acid biosynthesis; L-serine biosynthesis; L-serine from 3-phospho-D-glycerate: step 2/3. It participates in cofactor biosynthesis; pyridoxine 5'-phosphate biosynthesis; pyridoxine 5'-phosphate from D-erythrose 4-phosphate: step 3/5. In terms of biological role, catalyzes the reversible conversion of 3-phosphohydroxypyruvate to phosphoserine and of 3-hydroxy-2-oxo-4-phosphonooxybutanoate to phosphohydroxythreonine. The sequence is that of Phosphoserine aminotransferase from Burkholderia ambifaria (strain MC40-6).